Reading from the N-terminus, the 258-residue chain is Na(+)-translocating NADH-quinone reductase subunit C (258 aa).

The chain crosses the membrane as a helical span at residues L14 to G34. S226 is subject to FMN phosphoryl serine.

It belongs to the NqrC family. Composed of six subunits; NqrA, NqrB, NqrC, NqrD, NqrE and NqrF. Requires FMN as cofactor.

The protein localises to the cell inner membrane. The catalysed reaction is a ubiquinone + n Na(+)(in) + NADH + H(+) = a ubiquinol + n Na(+)(out) + NAD(+). Its function is as follows. NQR complex catalyzes the reduction of ubiquinone-1 to ubiquinol by two successive reactions, coupled with the transport of Na(+) ions from the cytoplasm to the periplasm. NqrA to NqrE are probably involved in the second step, the conversion of ubisemiquinone to ubiquinol. This chain is Na(+)-translocating NADH-quinone reductase subunit C, found in Neisseria meningitidis serogroup B (strain ATCC BAA-335 / MC58).